Here is a 453-residue protein sequence, read N- to C-terminus: DDB1- and CUL4-associated factor 12 (453 aa).

Over residues 1-12 the composition is skewed to basic residues; sequence MARKVVSRKRKA. A disordered region spans residues 1–34; it reads MARKVVSRKRKAPASPGAGSDAQGPQFGWDHSLH. Positions 1–38 are required for nuclear location and interaction with MOV10; sequence MARKVVSRKRKAPASPGAGSDAQGPQFGWDHSLHKRKR. At Ser15 the chain carries Phosphoserine. 6 WD repeats span residues 81–122, 123–175, 176–242, 243–286, 287–331, and 332–366; these read EREF…TSQI, TKIP…TLDP, VCVG…ALKD, IPKE…NTLS, KLLS…SYNV, and KSVC…LFYD.

This sequence belongs to the WD repeat DCAF12 family. In terms of assembly, component of the DCX(DCAF12) E3 ubiquitin ligase complex, at least composed of CUL4 (CUL4A or CUL4B), DDB1, DCAF12 and RBX1. In terms of tissue distribution, highly expressed in lung cancer tissues and some cancer cell lines. Restricted expression in normal testis.

It is found in the cytoplasm. The protein localises to the cytoskeleton. It localises to the microtubule organizing center. The protein resides in the centrosome. Its subcellular location is the nucleus. The protein operates within protein modification; protein ubiquitination. In terms of biological role, substrate-recognition component of a DCX (DDB1-CUL4-X-box) E3 ubiquitin-protein ligase complex of the DesCEND (destruction via C-end degrons) pathway, which recognizes a C-degron located at the extreme C terminus of target proteins, leading to their ubiquitination and degradation. The C-degron recognized by the DesCEND pathway is usually a motif of less than ten residues and can be present in full-length proteins, truncated proteins or proteolytically cleaved forms. The DCX(DCAF12) complex specifically recognizes proteins with a diglutamate (Glu-Glu) at the C-terminus, such as MAGEA3, MAGEA6 and CCT5, leading to their ubiquitination and degradation. Ubiquitination of MAGEA3, MAGEA6 by DCX(DCAF12) complex is required for starvation-induced autophagy. Also directly recognizes the C-terminal glutamate-leucine (Glu-Leu) degron as an alternative degron in proteins such as MOV10, leading to their ubiquitination and degradation. Controls the protein level of MOV10 during spermatogenesis and in T cells, especially after their activation. The chain is DDB1- and CUL4-associated factor 12 from Homo sapiens (Human).